Consider the following 370-residue polypeptide: Biotin synthase (370 aa).

The Radical SAM core domain maps to 79–314; the sequence is CCGNVVDLCS…KQIIRYAGGR (236 aa). [4Fe-4S] cluster is bound by residues Cys-97, Cys-101, and Cys-104. Residues Cys-142, Cys-179, Cys-239, and Arg-309 each coordinate [2Fe-2S] cluster.

Belongs to the radical SAM superfamily. Biotin synthase family. Homodimer. The cofactor is [4Fe-4S] cluster. Requires [2Fe-2S] cluster as cofactor.

It carries out the reaction (4R,5S)-dethiobiotin + (sulfur carrier)-SH + 2 reduced [2Fe-2S]-[ferredoxin] + 2 S-adenosyl-L-methionine = (sulfur carrier)-H + biotin + 2 5'-deoxyadenosine + 2 L-methionine + 2 oxidized [2Fe-2S]-[ferredoxin]. It functions in the pathway cofactor biosynthesis; biotin biosynthesis; biotin from 7,8-diaminononanoate: step 2/2. Its function is as follows. Catalyzes the conversion of dethiobiotin (DTB) to biotin by the insertion of a sulfur atom into dethiobiotin via a radical-based mechanism. This Trichodesmium erythraeum (strain IMS101) protein is Biotin synthase.